Consider the following 238-residue polypeptide: Snake venom metalloproteinase HF-1 (238 aa).

Residues Arg-17–Pro-221 enclose the Peptidase M12B domain. Residue Asp-106 participates in Ca(2+) binding. Disulfide bonds link Cys-130–Cys-216 and Cys-174–Cys-181. His-158 is a Zn(2+) binding site. Glu-159 is an active-site residue. His-162 and His-168 together coordinate Zn(2+). 2 residues coordinate Ca(2+): Cys-216 and Asn-219.

In terms of assembly, monomer. It depends on Zn(2+) as a cofactor. In terms of tissue distribution, expressed by the venom gland.

It localises to the secreted. Inhibited by EDTA and EGTA. Inhibited by serum and antihemorrhagic factors Da2-I and Da2-II from D.albiventris. Not inhibited by PMSF or SBT-I. Functionally, snake venom zinc metalloprotease that is weakly hemorrhagic and has Aalpha, Bbeta fibrinogenolytic activities. Cleaves the Aalpha chain of fibrinogen first, followed by the Bbeta chain and shows no effect on the gamma chain. Has caseinolytic activity. Induces dose-dependent edema. In Bothrops marajoensis (Marajo lancehead), this protein is Snake venom metalloproteinase HF-1.